Consider the following 380-residue polypeptide: Chaperone protein DnaJ (380 aa).

A J domain is found at 5–69; the sequence is DFYEVLGVGR…QKKAAYDQYG (65 aa). Residues 135–213 form a CR-type zinc finger; sequence GCSKEIRVPT…CHGQGRVEKT (79 aa). Residues Cys-148, Cys-151, Cys-165, Cys-168, Cys-187, Cys-190, Cys-201, and Cys-204 each contribute to the Zn(2+) site. CXXCXGXG motif repeat units follow at residues 148–155, 165–172, 187–194, and 201–208; these read CDSCDGSG, CGTCHGQG, CPHCHGRG, and CNSCHGQG.

It belongs to the DnaJ family. As to quaternary structure, homodimer. Zn(2+) is required as a cofactor.

The protein localises to the cytoplasm. Participates actively in the response to hyperosmotic and heat shock by preventing the aggregation of stress-denatured proteins and by disaggregating proteins, also in an autonomous, DnaK-independent fashion. Unfolded proteins bind initially to DnaJ; upon interaction with the DnaJ-bound protein, DnaK hydrolyzes its bound ATP, resulting in the formation of a stable complex. GrpE releases ADP from DnaK; ATP binding to DnaK triggers the release of the substrate protein, thus completing the reaction cycle. Several rounds of ATP-dependent interactions between DnaJ, DnaK and GrpE are required for fully efficient folding. Also involved, together with DnaK and GrpE, in the DNA replication of plasmids through activation of initiation proteins. The chain is Chaperone protein DnaJ from Photobacterium profundum (strain SS9).